The chain runs to 600 residues: Proline--tRNA ligase (600 aa).

Belongs to the class-II aminoacyl-tRNA synthetase family. ProS type 1 subfamily. As to quaternary structure, homodimer.

It is found in the cytoplasm. It catalyses the reaction tRNA(Pro) + L-proline + ATP = L-prolyl-tRNA(Pro) + AMP + diphosphate. Its function is as follows. Catalyzes the attachment of proline to tRNA(Pro) in a two-step reaction: proline is first activated by ATP to form Pro-AMP and then transferred to the acceptor end of tRNA(Pro). As ProRS can inadvertently accommodate and process non-cognate amino acids such as alanine and cysteine, to avoid such errors it has two additional distinct editing activities against alanine. One activity is designated as 'pretransfer' editing and involves the tRNA(Pro)-independent hydrolysis of activated Ala-AMP. The other activity is designated 'posttransfer' editing and involves deacylation of mischarged Ala-tRNA(Pro). The misacylated Cys-tRNA(Pro) is not edited by ProRS. This Gloeothece citriformis (strain PCC 7424) (Cyanothece sp. (strain PCC 7424)) protein is Proline--tRNA ligase.